We begin with the raw amino-acid sequence, 495 residues long: Glutamate--tRNA ligase (495 aa).

Positions 12-22 (PSPTGHLHIGN) match the 'HIGH' region motif. Residues 259–263 (KLSKR) carry the 'KMSKS' region motif. Lysine 262 provides a ligand contact to ATP.

This sequence belongs to the class-I aminoacyl-tRNA synthetase family. Glutamate--tRNA ligase type 1 subfamily. Monomer.

It is found in the cytoplasm. It carries out the reaction tRNA(Glu) + L-glutamate + ATP = L-glutamyl-tRNA(Glu) + AMP + diphosphate. Its function is as follows. Catalyzes the attachment of glutamate to tRNA(Glu) in a two-step reaction: glutamate is first activated by ATP to form Glu-AMP and then transferred to the acceptor end of tRNA(Glu). The polypeptide is Glutamate--tRNA ligase (Latilactobacillus sakei subsp. sakei (strain 23K) (Lactobacillus sakei subsp. sakei)).